The primary structure comprises 360 residues: MNSPLRGIWLWLPLLLTWLTPEVSSSWWYMGATGGSSRVMCDNVPGLVSSQRQLCHRHPDVMRAIGLGVTEWTAECQYQFRQHRWNCNTLDRDHSLFGRVLLRSSRESAFVYAISSAGVVFAITRACSQGEVKSCSCDPKKMGSGKDSKGVFDWGGCSDNIDYGIKFARAFVDAKERKGKDARALMNLHNNRAGRKSVKRFLKQECKCHGVSGSCSLRTCWLAMADFRKTGDYLWRKYNGAIQVVMNQDGTGFTVANERFKKPTKNDLVYFENSPDYCIRDRETGSLGTAGRVCNLTSRGMDSCEVMCCGRGYDTSHVTRMIKCGCKFHWCCAVRCQDCLEALDVHTCKAPKNADWTTPT.

The first 25 residues, 1-25 (MNSPLRGIWLWLPLLLTWLTPEVSS), serve as a signal peptide directing secretion. 11 disulfide bridges follow: Cys76/Cys87, Cys127/Cys135, Cys137/Cys157, Cys206/Cys220, Cys208/Cys215, Cys278/Cys309, Cys294/Cys304, Cys308/Cys348, Cys324/Cys339, Cys326/Cys336, and Cys331/Cys332. The O-palmitoleoyl serine; by PORCN moiety is linked to residue Ser212. An N-linked (GlcNAc...) asparagine glycan is attached at Asn295.

The protein belongs to the Wnt family. Palmitoleoylation is required for efficient binding to frizzled receptors. Depalmitoleoylation leads to Wnt signaling pathway inhibition.

It is found in the secreted. It localises to the extracellular space. Its subcellular location is the extracellular matrix. In terms of biological role, ligand for members of the frizzled family of seven transmembrane receptors. Probable developmental protein. May be a signaling molecule which affects the development of discrete regions of tissues. Is likely to signal over only few cell diameters. The polypeptide is Protein Wnt-2 (WNT2) (Ateles geoffroyi (Black-handed spider monkey)).